The following is a 217-amino-acid chain: Ribonuclease HII (217 aa).

The RNase H type-2 domain occupies 27–216 (RTIAGIDEAG…VREHLGESRC (190 aa)). Asp-33, Glu-34, and Asp-125 together coordinate a divalent metal cation.

Belongs to the RNase HII family. Requires Mn(2+) as cofactor. The cofactor is Mg(2+).

It localises to the cytoplasm. The enzyme catalyses Endonucleolytic cleavage to 5'-phosphomonoester.. Its function is as follows. Endonuclease that specifically degrades the RNA of RNA-DNA hybrids. This is Ribonuclease HII from Geobacter sulfurreducens (strain ATCC 51573 / DSM 12127 / PCA).